A 385-amino-acid chain; its full sequence is Glucans biosynthesis protein C (385 aa).

The next 10 membrane-spanning stretches (helical) occupy residues 17-39 (AWLM…TWHV), 54-76 (FIHS…MLFL), 88-110 (VERV…FIML), 136-158 (LISH…WIFK), 179-198 (LSVI…RTIF), 213-235 (IVMQ…IFPH), 242-261 (TPSR…YLLN), 276-295 (SVIT…SFGH), 308-330 (FVNA…GAYI), and 334-356 (ITSN…IILY).

This sequence belongs to the acyltransferase 3 family. OpgC subfamily.

It is found in the cell membrane. It functions in the pathway glycan metabolism; osmoregulated periplasmic glucan (OPG) biosynthesis. Functionally, necessary for the succinyl substitution of periplasmic glucans. Could catalyze the transfer of succinyl residues from the cytoplasmic side of the membrane to the nascent glucan backbones on the periplasmic side of the membrane. This Escherichia coli O157:H7 protein is Glucans biosynthesis protein C.